Reading from the N-terminus, the 51-residue chain is MSVTQIDLDDEALADVMRIAAVHTKKEAVNLAMRDYVERFRRIEALARSRE.

In terms of biological role, antitoxin component of a possible type II toxin-antitoxin (TA) system. The cognate toxin is VapC6. The sequence is that of Putative antitoxin VapB6 (vapB6) from Mycobacterium tuberculosis (strain CDC 1551 / Oshkosh).